The sequence spans 876 residues: Radial spoke head 10 homolog B (876 aa).

Basic and acidic residues predominate over residues methionine 1–alanine 16. The segment at methionine 1–threonine 71 is disordered. The segment covering arginine 17–lysine 37 has biased composition (polar residues). Residues glutamate 39–glutamate 50 show a composition bias toward low complexity. MORN repeat units lie at residues tyrosine 86–threonine 108, tyrosine 109–glycine 129, tyrosine 132–threonine 154, tyrosine 155–cysteine 172, tyrosine 179–tyrosine 196, tyrosine 204–asparagine 225, tyrosine 227–tryptophan 244, tyrosine 251–tryptophan 268, tyrosine 284–alanine 305, and tyrosine 307–histidine 328. Positions tryptophan 356–serine 372 are enriched in polar residues. The segment at tryptophan 356–serine 386 is disordered. A compositionally biased stretch (basic and acidic residues) spans arginine 375 to serine 386. A coiled-coil region spans residues leucine 790–phenylalanine 832. The segment at leucine 839 to lysine 876 is disordered.

In terms of assembly, interacts with RSPH6A. Does not appear to be part of the axonemal radial spoke complexes 1 or 2. In terms of tissue distribution, expressed in ependymal cells (at protein level).

The protein resides in the cytoplasm. Its subcellular location is the cytoskeleton. It is found in the cilium axoneme. The protein localises to the cell projection. It localises to the cilium. The protein resides in the flagellum. May function as part of the axonemal radial spoke complex 3 (RS3). Radial spoke complexes are important for ciliary motility. The protein is Radial spoke head 10 homolog B of Mus musculus (Mouse).